We begin with the raw amino-acid sequence, 425 residues long: Enolase (425 aa).

Gln-163 serves as a coordination point for (2R)-2-phosphoglycerate. Glu-205 serves as the catalytic Proton donor. Mg(2+) is bound by residues Asp-242, Glu-285, and Asp-312. 4 residues coordinate (2R)-2-phosphoglycerate: Lys-337, Arg-366, Ser-367, and Lys-388. Residue Lys-337 is the Proton acceptor of the active site.

Belongs to the enolase family. It depends on Mg(2+) as a cofactor.

The protein resides in the cytoplasm. It localises to the secreted. It is found in the cell surface. It catalyses the reaction (2R)-2-phosphoglycerate = phosphoenolpyruvate + H2O. Its pathway is carbohydrate degradation; glycolysis; pyruvate from D-glyceraldehyde 3-phosphate: step 4/5. Its function is as follows. Catalyzes the reversible conversion of 2-phosphoglycerate (2-PG) into phosphoenolpyruvate (PEP). It is essential for the degradation of carbohydrates via glycolysis. In Acidiphilium cryptum (strain JF-5), this protein is Enolase.